The primary structure comprises 252 residues: Mitochondrial peculiar membrane protein 1 (252 aa).

The interval 230–252 (TTTTSKGSSPQVKHKVVSVDEDN) is disordered.

The protein localises to the mitochondrion membrane. The polypeptide is Mitochondrial peculiar membrane protein 1 (MPM1) (Saccharomyces cerevisiae (strain ATCC 204508 / S288c) (Baker's yeast)).